Reading from the N-terminus, the 245-residue chain is MPLGLKPTCSMCKTNTSSMWKKGSQGEILCNNCSGKSSTAAGGNNNNNSSSSTSGSSSYTGTTFASTSTSQQSNGGNTKQSKQEIHRRSARLRNTKYKATPAAEKKVSTKGKGRRHIFKLKNGLYYQIGDVVSVVDEEDGKTYYAQVRGFIQDQYCEKSAALTWLIPTLSSPKDGFDPSTYIIGPDEDLPRKMECLEFVCHAPSEYFKSRSSPFPTIPTRPEKGFIWTHIGPTPAISIKETMANH.

A GATA-type zinc finger spans residues cysteine 9 to cysteine 33. A compositionally biased stretch (low complexity) spans threonine 39–serine 70. A disordered region spans residues threonine 39–lysine 110. Positions glutamine 71–glutamine 80 are enriched in polar residues.

It localises to the nucleus. Its function is as follows. Component of some chromatin complex recruited to chromatin sites methylated 'Lys-4' of histone H3 (H3K4me), with a preference for trimethylated form (H3K4me3). The polypeptide is GATA zinc finger domain-containing protein 1 (gatad1) (Xenopus laevis (African clawed frog)).